Consider the following 104-residue polypeptide: Large ribosomal subunit protein uL24 (104 aa).

It belongs to the universal ribosomal protein uL24 family. Part of the 50S ribosomal subunit.

In terms of biological role, one of two assembly initiator proteins, it binds directly to the 5'-end of the 23S rRNA, where it nucleates assembly of the 50S subunit. Functionally, one of the proteins that surrounds the polypeptide exit tunnel on the outside of the subunit. The chain is Large ribosomal subunit protein uL24 from Citrobacter koseri (strain ATCC BAA-895 / CDC 4225-83 / SGSC4696).